The following is a 320-amino-acid chain: Cytochrome c biogenesis protein CcsA (320 aa).

8 helical membrane-spanning segments follow: residues 13–33 (ISFS…FLLV), 46–66 (GMIV…IYSG), 73–93 (LYES…VSYL), 102–122 (LSAI…SGLL), 147–167 (MVLG…LLVI), 226–246 (IISL…VWAN), 259–274 (ETWA…IYFH), and 289–309 (VASM…LLGI).

It belongs to the CcmF/CycK/Ccl1/NrfE/CcsA family. May interact with Ccs1.

It localises to the plastid. Its subcellular location is the chloroplast thylakoid membrane. Functionally, required during biogenesis of c-type cytochromes (cytochrome c6 and cytochrome f) at the step of heme attachment. This Gossypium hirsutum (Upland cotton) protein is Cytochrome c biogenesis protein CcsA.